Reading from the N-terminus, the 388-residue chain is Succinate--CoA ligase [ADP-forming] subunit beta (388 aa).

In terms of domain architecture, ATP-grasp spans 9 to 244; sequence KEILRKYNVP…LDEEDANEIE (236 aa). ATP contacts are provided by residues Lys46, 53–55, Glu99, Ala102, and Glu107; that span reads GRG. Residues Asn199 and Asp213 each contribute to the Mg(2+) site. Substrate contacts are provided by residues Asn264 and 321–323; that span reads GIM.

This sequence belongs to the succinate/malate CoA ligase beta subunit family. Heterotetramer of two alpha and two beta subunits. The cofactor is Mg(2+).

It carries out the reaction succinate + ATP + CoA = succinyl-CoA + ADP + phosphate. The catalysed reaction is GTP + succinate + CoA = succinyl-CoA + GDP + phosphate. It participates in carbohydrate metabolism; tricarboxylic acid cycle; succinate from succinyl-CoA (ligase route): step 1/1. In terms of biological role, succinyl-CoA synthetase functions in the citric acid cycle (TCA), coupling the hydrolysis of succinyl-CoA to the synthesis of either ATP or GTP and thus represents the only step of substrate-level phosphorylation in the TCA. The beta subunit provides nucleotide specificity of the enzyme and binds the substrate succinate, while the binding sites for coenzyme A and phosphate are found in the alpha subunit. The sequence is that of Succinate--CoA ligase [ADP-forming] subunit beta from Ralstonia nicotianae (strain ATCC BAA-1114 / GMI1000) (Ralstonia solanacearum).